The primary structure comprises 180 residues: Bifunctional protein PyrR (180 aa).

The short motif at 101-113 (VILVDDVLYTGRT) is the PRPP-binding element.

It belongs to the purine/pyrimidine phosphoribosyltransferase family. PyrR subfamily. Homodimer and homohexamer; in equilibrium.

It catalyses the reaction UMP + diphosphate = 5-phospho-alpha-D-ribose 1-diphosphate + uracil. Regulates transcriptional attenuation of the pyrimidine nucleotide (pyr) operon by binding in a uridine-dependent manner to specific sites on pyr mRNA. This disrupts an antiterminator hairpin in the RNA and favors formation of a downstream transcription terminator, leading to a reduced expression of downstream genes. Functionally, also displays a weak uracil phosphoribosyltransferase activity which is not physiologically significant. The polypeptide is Bifunctional protein PyrR (Bacillus mycoides (strain KBAB4) (Bacillus weihenstephanensis)).